A 255-amino-acid chain; its full sequence is uncharacterized protein (255 aa).

Residues 1–23 form the signal peptide; sequence MKRLNKLVLYISFLILVISFTAG. Residue Cys24 is the site of N-palmitoyl cysteine attachment. Cys24 carries the S-diacylglycerol cysteine lipid modification.

The protein belongs to the staphylococcal tandem lipoprotein family.

Its subcellular location is the cell membrane. This is an uncharacterized protein from Staphylococcus aureus (strain NCTC 8325 / PS 47).